A 354-amino-acid chain; its full sequence is Ribosomal RNA large subunit methyltransferase M (354 aa).

S-adenosyl-L-methionine is bound by residues Ser-183, 216-219 (SPGG), Asp-235, Asp-255, and Asp-271. Residue Lys-300 is the Proton acceptor of the active site.

It belongs to the class I-like SAM-binding methyltransferase superfamily. RNA methyltransferase RlmE family. RlmM subfamily. In terms of assembly, monomer.

The protein resides in the cytoplasm. It catalyses the reaction cytidine(2498) in 23S rRNA + S-adenosyl-L-methionine = 2'-O-methylcytidine(2498) in 23S rRNA + S-adenosyl-L-homocysteine + H(+). Catalyzes the 2'-O-methylation at nucleotide C2498 in 23S rRNA. The protein is Ribosomal RNA large subunit methyltransferase M of Pseudomonas putida (strain ATCC 47054 / DSM 6125 / CFBP 8728 / NCIMB 11950 / KT2440).